The following is a 97-amino-acid chain: UPF0235 protein HD_0778 (97 aa).

Belongs to the UPF0235 family.

This chain is UPF0235 protein HD_0778, found in Haemophilus ducreyi (strain 35000HP / ATCC 700724).